The primary structure comprises 121 residues: UPF0344 protein BCG9842_B4136 (121 aa).

Transmembrane regions (helical) follow at residues 6 to 26 (ITAWALGLILFFVAYSLYSAG), 38 to 58 (LMYIIIIVTGFMLYMSIVKTA), 65 to 85 (WYGLKMLTGILVIGGMEMVLV), and 92 to 112 (PTGAVWGLFIVALVAVFYLGL).

It belongs to the UPF0344 family.

It is found in the cell membrane. In Bacillus cereus (strain G9842), this protein is UPF0344 protein BCG9842_B4136.